A 386-amino-acid chain; its full sequence is Heavy metal-associated isoprenylated plant protein 5 (386 aa).

Over residues 1–16 (MGEVQEGPKVEQEKKP) the composition is skewed to basic and acidic residues. The disordered stretch occupies residues 1–40 (MGEVQEGPKVEQEKKPAATVVPVETTDGKPKSGGGDSAAA). The HMA 1 domain maps to 49 to 112 (VSAFVYKVDM…KLEEKTKRKV (64 aa)). A metal cation contacts are provided by Cys60 and Cys63. The disordered stretch occupies residues 129–153 (VGEKKADGGDKEAAPPAPAPAAPKE). The segment covering 130–141 (GEKKADGGDKEA) has biased composition (basic and acidic residues). The HMA 2 domain occupies 153 to 220 (ESVVPLKIRL…KLKRTVEPLV (68 aa)). Residues Cys164 and Cys167 each contribute to the a metal cation site. 2 stretches are compositionally biased toward basic and acidic residues: residues 223 to 245 (KKDD…KKEA) and 252 to 297 (EAKK…KKDG). The segment at 223-301 (KKDDGAAENK…EKKKDGGGVP (79 aa)) is disordered. Cys383 carries the post-translational modification Cysteine methyl ester. A lipid anchor (S-farnesyl cysteine) is attached at Cys383. The propeptide at 384–386 (SVM) is removed in mature form.

Belongs to the HIPP family. Post-translationally, efficiently farnesylated in vitro.

Heavy-metal-binding protein. Involved in disease resistance. This Arabidopsis thaliana (Mouse-ear cress) protein is Heavy metal-associated isoprenylated plant protein 5.